We begin with the raw amino-acid sequence, 364 residues long: A-type ATP synthase subunit C (364 aa).

This sequence belongs to the V-ATPase V0D/AC39 subunit family. In terms of assembly, has multiple subunits with at least A(3), B(3), C, D, E, F, H, I and proteolipid K(x).

It localises to the cell membrane. In terms of biological role, component of the A-type ATP synthase that produces ATP from ADP in the presence of a proton gradient across the membrane. This Desulfurococcus sp. (strain SY) protein is A-type ATP synthase subunit C.